The sequence spans 271 residues: Cytosolic Fe-S cluster assembly factor NUBP2 (271 aa).

The residue at position 1 (Met-1) is an N-acetylmethionine. 22 to 29 (GKGGVGKS) contributes to the ATP binding site. [4Fe-4S] cluster-binding residues include Cys-196 and Cys-199.

Belongs to the Mrp/NBP35 ATP-binding proteins family. NUBP2/CFD1 subfamily. As to quaternary structure, heterotetramer of 2 NUBP1 and 2 NUBP2 chains. Interacts with KIFC1. Interacts with NUBP1. [4Fe-4S] cluster is required as a cofactor.

It localises to the nucleus. The protein localises to the cytoplasm. Its subcellular location is the cytoskeleton. It is found in the microtubule organizing center. The protein resides in the centrosome. It localises to the cilium axoneme. The protein localises to the centriole. Component of the cytosolic iron-sulfur (Fe/S) protein assembly (CIA) machinery. Required for maturation of extramitochondrial Fe-S proteins. The NUBP1-NUBP2 heterotetramer forms a Fe-S scaffold complex, mediating the de novo assembly of an Fe-S cluster and its transfer to target apoproteins. Negatively regulates cilium formation and structure. The sequence is that of Cytosolic Fe-S cluster assembly factor NUBP2 from Bos taurus (Bovine).